The primary structure comprises 250 residues: Probable transcriptional regulatory protein Cvib_1432 (250 aa).

The protein belongs to the TACO1 family.

The protein resides in the cytoplasm. This Chlorobium phaeovibrioides (strain DSM 265 / 1930) (Prosthecochloris vibrioformis (strain DSM 265)) protein is Probable transcriptional regulatory protein Cvib_1432.